The following is a 235-amino-acid chain: Casparian strip membrane protein 2 (235 aa).

Residues 1-70 are Cytoplasmic-facing; it reads MTSESATVIQ…RSGAEGFRRC (70 aa). The chain crosses the membrane as a helical span at residues 71–91; it reads LAVIDFLLRVAAFGPTLAAAI. Residues 92-118 are Extracellular-facing; sequence STGTADERLSVFTNFFQFHARFDDFPA. Residues 119–139 form a helical membrane-spanning segment; it reads FTFFLVANAVAAGYLVLSLPF. The Cytoplasmic segment spans residues 140-162; sequence SVVVILRPNKATGGVRLLLLLCD. Residues 163–183 form a helical membrane-spanning segment; it reads VLIMALLTAAGAAAAAIVYVA. Over 184 to 210 the chain is Extracellular; sequence HSGNRRANWVPICMQFHGFCQRTSGSV. A helical membrane pass occupies residues 211–231; that stretch reads VATFLAVLVFIVLILMAACVI. The Cytoplasmic portion of the chain corresponds to 232 to 235; sequence RRSK.

The protein belongs to the Casparian strip membrane proteins (CASP) family. In terms of assembly, homodimer and heterodimers.

The protein localises to the cell membrane. Its function is as follows. Regulates membrane-cell wall junctions and localized cell wall deposition. Required for establishment of the Casparian strip membrane domain (CSD) and the subsequent formation of Casparian strips, a cell wall modification of the root endodermis that determines an apoplastic barrier between the intraorganismal apoplasm and the extraorganismal apoplasm and prevents lateral diffusion. The protein is Casparian strip membrane protein 2 of Sorghum bicolor (Sorghum).